Reading from the N-terminus, the 286-residue chain is Master replication protein (286 aa).

Residues 2–96 (ARQVICWCFT…VEGPWEFGEF (95 aa)) form the CRESS-DNA virus Rep endonuclease domain. An RCR-1 motif is present at residues 9–12 (CFTL). Residues Glu33 and His41 each contribute to the a divalent metal cation site. An RCR-2 motif is present at residues 41 to 43 (HYQ). The short motif at 50–70 (KRTSLVQMKKLLPGAHLEKRR) is the Nuclear localization signal element. Catalysis depends on Tyr79, which acts as the For DNA cleavage activity. Residues 79–82 (YAMK) carry the RCR-3 motif. Position 84 (Asp84) interacts with a divalent metal cation. The Nuclear localization signal motif lies at 96 to 102 (FKEVLED). 180–188 (GPQGGEGKT) is a binding site for ATP.

Belongs to the nanoviridea/circoviridae replication-associated protein family. In terms of assembly, homooligomer (Potential). Rep binds to repeated DNA motifs (iterons). It depends on Mg(2+) as a cofactor. Mn(2+) serves as cofactor.

Its subcellular location is the host nucleus. The enzyme catalyses ATP + H2O = ADP + phosphate + H(+). In terms of biological role, essential for the replication of all genomic viral ssDNA (trans-replication). The closed circular ssDNA genome is first converted to a superhelical dsDNA. Rep binds a specific hairpin at the genome origin of replication. Introduces an endonucleolytic nick within the conserved sequence 5'-A[GT]TATTAC-3' in the intergenic region of the genome, thereby initiating the rolling circle replication (RCR). Following cleavage, binds covalently to the 5'-phosphate of DNA as a tyrosyl ester. The cleavage gives rise to a free 3'-OH that serves as a primer for the cellular DNA polymerase. The polymerase synthesizes the (+) strand DNA by rolling circle mechanism. After one round of replication, a Rep-catalyzed nucleotidyl transfer reaction releases a circular single-stranded virus genome, thereby terminating the replication. Displays origin-specific DNA cleavage, nucleotidyl transferase, ATPase and helicase activities. In Subterranean clover stunt virus (strain F) (SCSV), this protein is Master replication protein (DNA-R).